The chain runs to 149 residues: Nucleoside diphosphate kinase (149 aa).

Residues Lys9, Phe57, Arg85, Thr91, Arg102, and Asn112 each coordinate ATP. Residue His115 is the Pros-phosphohistidine intermediate of the active site.

This sequence belongs to the NDK family. Requires Mg(2+) as cofactor.

It is found in the cytoplasm. The catalysed reaction is a 2'-deoxyribonucleoside 5'-diphosphate + ATP = a 2'-deoxyribonucleoside 5'-triphosphate + ADP. It catalyses the reaction a ribonucleoside 5'-diphosphate + ATP = a ribonucleoside 5'-triphosphate + ADP. In terms of biological role, major role in the synthesis of nucleoside triphosphates other than ATP. The ATP gamma phosphate is transferred to the NDP beta phosphate via a ping-pong mechanism, using a phosphorylated active-site intermediate. The polypeptide is Nucleoside diphosphate kinase (Methanoculleus marisnigri (strain ATCC 35101 / DSM 1498 / JR1)).